Reading from the N-terminus, the 100-residue chain is Elevenin-Vc1 (100 aa).

The signal sequence occupies residues 1 to 24 (MAPSQKALLVLVLSMLLTASDSWA). An intrachain disulfide couples Cys-29 to Cys-38. A propeptide spanning residues 44–100 (KRGGDSLSVGGSAELDDALTDPFLRSEEPREWRELTRLSRVLQTFLSHPTGETEQHD) is cleaved from the precursor.

This sequence belongs to the elevenin family. Monomer. As to expression, expressed by the venom duct.

The protein resides in the secreted. Its function is as follows. May mimic the function of prey elevenin neuropeptide. In vivo, intracranial injection in mice induces hyperactivity (tested at 5 and 10 nM). The polypeptide is Elevenin-Vc1 (Conus victoriae (Queen Victoria cone)).